The chain runs to 180 residues: Amnesiac neuropeptides (180 aa).

The signal sequence occupies residues 1–32 (MRSFCCCFYPAAVALHCVLLFYTFFLLFRASA). Propeptides lie at residues 33–35 (LRR) and 152–180 (GRRSVPRGQPKFSRENPRALSPSLLGEMR). A disordered region spans residues 155 to 180 (SVPRGQPKFSRENPRALSPSLLGEMR).

As to expression, enriched expression in the embryonic and larval nervous systems. Strongly expressed in two large neurons that project over all the lobes of the mushroom bodies.

Its subcellular location is the secreted. Functionally, required for associative learning and memory in adults. Expression pattern suggests a modulatory role in memory formation. Controls neurotransmitter-mediated signaling pathways associated with the structure of the larval peripheral nerve. In Drosophila melanogaster (Fruit fly), this protein is Amnesiac neuropeptides (amn).